Consider the following 585-residue polypeptide: Probable G-protein coupled receptor Mth-like 10 (585 aa).

Residues 1-32 form the signal peptide; the sequence is MPKKIHQPGGSLYCGVTLLGVLCLVVFRLIPG. Residues 33-250 are Extracellular-facing; sequence IPFGTYVMAE…DHSTVKIINS (218 aa). 5 disulfides stabilise this stretch: cysteine 56-cysteine 110, cysteine 112-cysteine 117, cysteine 121-cysteine 216, cysteine 122-cysteine 135, and cysteine 177-cysteine 236. Asparagine 63 and asparagine 72 each carry an N-linked (GlcNAc...) asparagine glycan. Asparagine 142, asparagine 152, asparagine 157, asparagine 198, and asparagine 223 each carry an N-linked (GlcNAc...) asparagine glycan. Residues 251–271 traverse the membrane as a helical segment; the sequence is YAMMFSIPFMMLTIAVYLLIP. Topologically, residues 272–280 are cytoplasmic; sequence ELRNQHGKS. The helical transmembrane segment at 281 to 301 threads the bilayer; that stretch reads LVCYLIGLSVGYSSLCYVQLY. Residues 302 to 312 lie on the Extracellular side of the membrane; it reads QVDATGVTCKV. Residues 313 to 333 form a helical membrane-spanning segment; it reads FGYTAYFFFMGAYMWLSVISF. Residues 334–353 lie on the Cytoplasmic side of the membrane; the sequence is DLWHNFRGTRGINRFQEKKR. The helical transmembrane segment at 354–374 threads the bilayer; the sequence is FLFYSLYSWGIALVFLAFTYC. At 375-404 the chain is on the extracellular side; that stretch reads AQQLTNLPANLKPGIGDGVYCWLDMSNWAA. The chain crosses the membrane as a helical span at residues 405–425; sequence MIYFYGPILAIVVANTIMFIM. Residues 426–466 lie on the Cytoplasmic side of the membrane; sequence TAIKIHGVQREMARIIASENSTKNLRTEKDKRFYRAWSNYR. A helical transmembrane segment spans residues 467-487; it reads FGLFLRLFLIMGITWLTELIS. Over 488 to 498 the chain is Extracellular; sequence YFVGSDKGWSK. A helical membrane pass occupies residues 499–519; that stretch reads LFYISDLANAMQGFLIFMLFV. Residues 520–585 are Cytoplasmic-facing; it reads MKKKVKHLIT…VDPQKTTIFR (66 aa).

It belongs to the G-protein coupled receptor 2 family. Mth subfamily.

The protein resides in the cell membrane. The protein is Probable G-protein coupled receptor Mth-like 10 (mthl10) of Drosophila melanogaster (Fruit fly).